Here is a 294-residue protein sequence, read N- to C-terminus: Small ribosomal subunit protein uS2 (294 aa).

Residues 254–294 (ESSNTEAPVAETAAAEAPVADAAIEAPVAEEAKTTEADDTK) are disordered. Low complexity predominate over residues 259–282 (EAPVAETAAAEAPVADAAIEAPVA). Residues 283-294 (EEAKTTEADDTK) are compositionally biased toward basic and acidic residues.

This sequence belongs to the universal ribosomal protein uS2 family.

The sequence is that of Small ribosomal subunit protein uS2 from Renibacterium salmoninarum (strain ATCC 33209 / DSM 20767 / JCM 11484 / NBRC 15589 / NCIMB 2235).